Consider the following 426-residue polypeptide: MSALNKLFGDERKRDLESNVAALFSQSSGPVDTLEVKSKPRTLLPVVSKRQETETAKPAEPTEIVEADLPRKRAKKAKKTNEDDDHLEEKYMQQVLKEDSDHESEAEAPTEPVVELKPSKRASRPDMKEEELAKAERTVFVGNVPHEAITDKKVYKEFKQLVAQRKLSKEDEDDEEQKAEKYAVESIRFRSIAFEEALPRKVAFVQQKLHHTRDSVNAYVVYAEKEAVTAACKLNGSVFHDHHLRFDSVAHPAPHDRKRSVFVGNLDFEESEESLWKHFMSCGPIEYVRIVRDPKTNVGKGFAYVQFADLVSVNKALLLNDKKMAVGKGRKLRVTRCRNMQKVQRQSNTAALPKLTDQQKTKLGRARKVLGKADRATLGKLTIEGTRATKGANTPNLRVKKARSKTGRVTKRSQAFKKAEANKKQK.

Residues 26–128 (QSSGPVDTLE…SKRASRPDMK (103 aa)) form a disordered region. Positions 87-105 (LEEKYMQQVLKEDSDHESE) are enriched in basic and acidic residues. RRM domains follow at residues 137–251 (RTVF…SVAH) and 259–339 (RSVF…RCRN). Residues 401–415 (KARSKTGRVTKRSQA) show a composition bias toward basic residues. The segment at 401–426 (KARSKTGRVTKRSQAFKKAEANKKQK) is disordered. Residues 417 to 426 (KKAEANKKQK) show a composition bias toward basic and acidic residues.

This sequence belongs to the RRM RBM34 family.

The protein localises to the nucleus. It is found in the nucleolus. Functionally, involved in pre-25S rRNA processing. The polypeptide is Nucleolar protein 12 (NOP12) (Eremothecium gossypii (strain ATCC 10895 / CBS 109.51 / FGSC 9923 / NRRL Y-1056) (Yeast)).